Here is a 233-residue protein sequence, read N- to C-terminus: Phosducin-like protein C2A9.09 (233 aa).

A Phosducin domain is found at 58–212 (EDEEDDEFLQ…DIAALKDPQN (155 aa)). Residues 86 to 233 (FGSVYPISKP…VNDDLDDDFD (148 aa)) form a thioredoxin fold region. The disordered stretch occupies residues 207-233 (LKDPQNAEDELGKRDSSVNDDLDDDFD). A phosphoserine mark is found at S222 and S223. A compositionally biased stretch (acidic residues) spans 224 to 233 (VNDDLDDDFD).

Belongs to the phosducin family.

The sequence is that of Phosducin-like protein C2A9.09 from Schizosaccharomyces pombe (strain 972 / ATCC 24843) (Fission yeast).